The following is a 131-amino-acid chain: Large-conductance mechanosensitive channel (131 aa).

The next 3 membrane-spanning stretches (helical) occupy residues 8–28 (FALK…GAFG), 30–50 (IVTS…VGGI), and 72–92 (GQFI…FMFI).

This sequence belongs to the MscL family. In terms of assembly, homopentamer.

It localises to the cell membrane. Its function is as follows. Channel that opens in response to stretch forces in the membrane lipid bilayer. May participate in the regulation of osmotic pressure changes within the cell. In Alkaliphilus oremlandii (strain OhILAs) (Clostridium oremlandii (strain OhILAs)), this protein is Large-conductance mechanosensitive channel.